The sequence spans 543 residues: Probable protein kinase UbiB (543 aa).

Residues 123–501 form the Protein kinase domain; it reads DFDSQALASA…GSRQGRARYL (379 aa). Residues 129 to 137 and Lys-152 each bind ATP; that span reads LASASIAQV. The active-site Proton acceptor is Asp-287. The helical transmembrane segment at 517–537 threads the bilayer; sequence MVNIALWPIGLYVAGGVIWLA.

It belongs to the ABC1 family. UbiB subfamily.

It localises to the cell inner membrane. Its pathway is cofactor biosynthesis; ubiquinone biosynthesis [regulation]. In terms of biological role, is probably a protein kinase regulator of UbiI activity which is involved in aerobic coenzyme Q (ubiquinone) biosynthesis. In Edwardsiella ictaluri (strain 93-146), this protein is Probable protein kinase UbiB.